The sequence spans 87 residues: uncharacterized protein (87 aa).

In terms of domain architecture, 2Fe-2S ferredoxin-type spans 4 to 87; it reads SIIEITNIKK…KPKGNITIKI (84 aa). Positions 38, 43, 46, and 75 each coordinate [2Fe-2S] cluster.

It depends on [2Fe-2S] cluster as a cofactor.

This is an uncharacterized protein from Buchnera aphidicola subsp. Acyrthosiphon pisum (strain APS) (Acyrthosiphon pisum symbiotic bacterium).